A 124-amino-acid polypeptide reads, in one-letter code: NADH dehydrogenase [ubiquinone] iron-sulfur protein 6, mitochondrial (124 aa).

Residues 1 to 28 (MAAAMTFCRLLNRCGEAARSLPLGARCF) constitute a mitochondrion transit peptide. Lys98 is modified (N6-acetyllysine).

Belongs to the complex I NDUFS6 subunit family. As to quaternary structure, mammalian complex I is composed of 45 different subunits. This is a component of the iron-sulfur (IP) fragment of the enzyme.

Its subcellular location is the mitochondrion inner membrane. In terms of biological role, accessory subunit of the mitochondrial membrane respiratory chain NADH dehydrogenase (Complex I), that is believed not to be involved in catalysis. Complex I functions in the transfer of electrons from NADH to the respiratory chain. The immediate electron acceptor for the enzyme is believed to be ubiquinone. The sequence is that of NADH dehydrogenase [ubiquinone] iron-sulfur protein 6, mitochondrial (NDUFS6) from Homo sapiens (Human).